The chain runs to 490 residues: Aspartyl/glutamyl-tRNA(Asn/Gln) amidotransferase subunit B (490 aa).

It belongs to the GatB/GatE family. GatB subfamily. In terms of assembly, heterotrimer of A, B and C subunits.

It carries out the reaction L-glutamyl-tRNA(Gln) + L-glutamine + ATP + H2O = L-glutaminyl-tRNA(Gln) + L-glutamate + ADP + phosphate + H(+). It catalyses the reaction L-aspartyl-tRNA(Asn) + L-glutamine + ATP + H2O = L-asparaginyl-tRNA(Asn) + L-glutamate + ADP + phosphate + 2 H(+). Allows the formation of correctly charged Asn-tRNA(Asn) or Gln-tRNA(Gln) through the transamidation of misacylated Asp-tRNA(Asn) or Glu-tRNA(Gln) in organisms which lack either or both of asparaginyl-tRNA or glutaminyl-tRNA synthetases. The reaction takes place in the presence of glutamine and ATP through an activated phospho-Asp-tRNA(Asn) or phospho-Glu-tRNA(Gln). The protein is Aspartyl/glutamyl-tRNA(Asn/Gln) amidotransferase subunit B of Synechococcus sp. (strain JA-2-3B'a(2-13)) (Cyanobacteria bacterium Yellowstone B-Prime).